Consider the following 427-residue polypeptide: ETS domain-containing protein Elk-1 (427 aa).

The ETS DNA-binding region spans valine 5–valine 86. Disordered regions lie at residues alanine 116–arginine 146, leucine 166–proline 202, and proline 226–proline 252. Glycyl lysine isopeptide (Lys-Gly) (interchain with G-Cter in SUMO) cross-links involve residues lysine 229, lysine 248, and lysine 253. Polar residues predominate over residues serine 300 to glutamine 310. The tract at residues serine 300–alanine 350 is disordered. Phosphoserine; by MAPK1 is present on serine 323. 4 positions are modified to phosphothreonine; by MAPK1: threonine 335, threonine 352, threonine 362, and threonine 367. The segment at glycine 348 to serine 398 is sufficient for interaction with MAD2L2. Threonine 380 carries O-linked (GlcNAc) threonine glycosylation. Phosphoserine; by MAPK1 and MAPK8 is present on serine 382. Serine 388 is subject to Phosphoserine; by MAPK1. Threonine 416 carries the phosphothreonine; by MAPK1 modification. Position 421 is a phosphoserine; by MAPK1 (serine 421).

Belongs to the ETS family. In terms of assembly, interacts in its sumoylated form with PIAS2/PIASX which enhances its transcriptional activator activity. Interacts with MAD2L2; the interaction is direct and promotes phosphorylation by the kinases MAPK8 and/or MAPK9. Interacts with POU1F1. Post-translationally, sumoylation represses transcriptional activator activity as it results in recruitment of HDAC2 to target gene promoters which leads to decreased histone acetylation and reduced transactivator activity. It also regulates nuclear retention. In terms of processing, on mitogenic stimulation, phosphorylated on C-terminal serine and threonine residues by MAPK1. Ser-382 and Ser-388 are the preferred sites for MAPK1. In vitro, phosphorylation by MAPK1 potentiates ternary complex formation with the serum responses factors, SRE and SRF. Also phosphorylated on Ser-382 by MAPK8 and/or MAKP9. Phosphorylation leads to loss of sumoylation and restores transcriptional activator activity. Phosphorylated and activated by CAMK4, MAPK11, MAPK12 and MAPK14. Upon bFGF stimulus, phosphorylated by PAK1. Phosphorylated by PRP4K at Thr-416; phosphorylation activation ELK1 transcriptional activity.

The protein localises to the nucleus. In terms of biological role, transcription factor that binds to purine-rich DNA sequences. Forms a ternary complex with SRF and the ETS and SRF motifs of the serum response element (SRE) on the promoter region of immediate early genes such as FOS and IER2. Induces target gene transcription upon JNK and MAPK-signaling pathways stimulation. The polypeptide is ETS domain-containing protein Elk-1 (Rattus norvegicus (Rat)).